The primary structure comprises 79 residues: MTLVMGSCCGRFCDAKNKFKKDDIEEEGEGYCDYKNLNDLDEATRIEFGPLYIINEEKSDINTLDIKRRYRHAIESVYF.

It belongs to the orthopoxvirus OPG051 family.

This is Protein OPG051 (OPG051) from Variola virus (isolate Human/India/Ind3/1967) (VARV).